A 936-amino-acid polypeptide reads, in one-letter code: Translation initiation factor IF-2 (936 aa).

The segment at 102-332 is disordered; sequence PEPGPVLKKD…SGSRQKFRKM (231 aa). Positions 108–119 are enriched in basic and acidic residues; the sequence is LKKDHVHEEPEK. The span at 127 to 137 shows a compositional bias: acidic residues; the sequence is SEPEVEPEVEP. Over residues 151–160 the composition is skewed to low complexity; sequence PTEAVSVPEP. Over residues 182-194 the composition is skewed to polar residues; it reads QSSTMKAQASPEM. Basic and acidic residues-rich tracts occupy residues 217-227 and 237-267; these read SALDRGSESDR and KEQA…EAKT. Residues 272-281 are compositionally biased toward low complexity; sequence KAAGTTGSAA. A compositionally biased stretch (basic residues) spans 287–297; the sequence is SKKKKGGKKKK. The region spanning 433-603 is the tr-type G domain; sequence IRPPVVTIMG…LMEAEIRELK (171 aa). A G1 region spans residues 442–449; that stretch reads GHVDHGKT. 442–449 provides a ligand contact to GTP; it reads GHVDHGKT. The tract at residues 467–471 is G2; that stretch reads GITQH. The tract at residues 489-492 is G3; it reads DTPG. Residues 489–493 and 543–546 contribute to the GTP site; these read DTPGH and NKID. The G4 stretch occupies residues 543–546; the sequence is NKID. Residues 579-581 form a G5 region; the sequence is SAK.

It belongs to the TRAFAC class translation factor GTPase superfamily. Classic translation factor GTPase family. IF-2 subfamily.

The protein resides in the cytoplasm. In terms of biological role, one of the essential components for the initiation of protein synthesis. Protects formylmethionyl-tRNA from spontaneous hydrolysis and promotes its binding to the 30S ribosomal subunits. Also involved in the hydrolysis of GTP during the formation of the 70S ribosomal complex. The chain is Translation initiation factor IF-2 from Prosthecochloris aestuarii (strain DSM 271 / SK 413).